The sequence spans 110 residues: Phosphoribosyl-ATP pyrophosphatase (110 aa).

It belongs to the PRA-PH family.

It localises to the cytoplasm. It catalyses the reaction 1-(5-phospho-beta-D-ribosyl)-ATP + H2O = 1-(5-phospho-beta-D-ribosyl)-5'-AMP + diphosphate + H(+). Its pathway is amino-acid biosynthesis; L-histidine biosynthesis; L-histidine from 5-phospho-alpha-D-ribose 1-diphosphate: step 2/9. In Teredinibacter turnerae (strain ATCC 39867 / T7901), this protein is Phosphoribosyl-ATP pyrophosphatase.